The following is a 218-amino-acid chain: uncharacterized protein (218 aa).

Residues 7-123 (RVALADDQPL…ELIDAIRAAA (117 aa)) enclose the Response regulatory domain. Asp58 carries the 4-aspartylphosphate modification. The HTH luxR-type domain occupies 150–215 (AEELAEPFTK…QAVVFAIRNG (66 aa)). The segment at residues 174–193 (NEDIAEKLFVSESTVKTHVH) is a DNA-binding region (H-T-H motif).

In terms of processing, phosphorylated by YxjM.

It localises to the cytoplasm. In terms of biological role, probable member of the two-component regulatory system YxjM/YxjL. This is an uncharacterized protein from Bacillus subtilis (strain 168).